A 264-amino-acid chain; its full sequence is Phosphonoacetaldehyde hydrolase (264 aa).

D9 acts as the Nucleophile in catalysis. Mg(2+) contacts are provided by D9 and A11. Catalysis depends on K50, which acts as the Schiff-base intermediate with substrate. D183 is a binding site for Mg(2+).

It belongs to the HAD-like hydrolase superfamily. PhnX family. Homodimer. Mg(2+) is required as a cofactor.

It carries out the reaction phosphonoacetaldehyde + H2O = acetaldehyde + phosphate + H(+). Functionally, involved in phosphonate degradation. This is Phosphonoacetaldehyde hydrolase from Bacillus cereus (strain AH820).